The following is a 156-amino-acid chain: SsrA-binding protein (156 aa).

This sequence belongs to the SmpB family.

The protein resides in the cytoplasm. Required for rescue of stalled ribosomes mediated by trans-translation. Binds to transfer-messenger RNA (tmRNA), required for stable association of tmRNA with ribosomes. tmRNA and SmpB together mimic tRNA shape, replacing the anticodon stem-loop with SmpB. tmRNA is encoded by the ssrA gene; the 2 termini fold to resemble tRNA(Ala) and it encodes a 'tag peptide', a short internal open reading frame. During trans-translation Ala-aminoacylated tmRNA acts like a tRNA, entering the A-site of stalled ribosomes, displacing the stalled mRNA. The ribosome then switches to translate the ORF on the tmRNA; the nascent peptide is terminated with the 'tag peptide' encoded by the tmRNA and targeted for degradation. The ribosome is freed to recommence translation, which seems to be the essential function of trans-translation. In Clostridium perfringens (strain 13 / Type A), this protein is SsrA-binding protein.